Consider the following 346-residue polypeptide: B3 domain-containing protein At5g60142 (346 aa).

The segment at residues 13–109 (PKFFKVYLPD…CFNFCIYGRA (97 aa)) is a DNA-binding region (TF-B3). 2 disordered regions span residues 158–179 (QDYN…ADND) and 192–243 (TSSE…HDRQ). Residues 192-217 (TSSEDIIVIDDDDDDDDQDYGDDDHA) are compositionally biased toward acidic residues. Over residues 218–229 (DVEKERWRGVKT) the composition is skewed to basic and acidic residues.

The protein localises to the nucleus. The polypeptide is B3 domain-containing protein At5g60142 (Arabidopsis thaliana (Mouse-ear cress)).